Reading from the N-terminus, the 217-residue chain is Probable GTP-binding protein EngB (217 aa).

The region spanning glycine 33–arginine 217 is the EngB-type G domain. Residues glycine 41–serine 48, glycine 68–glutamate 72, aspartate 95–glycine 98, threonine 162–aspartate 165, and threonine 196–serine 198 each bind GTP. Mg(2+)-binding residues include serine 48 and threonine 70.

It belongs to the TRAFAC class TrmE-Era-EngA-EngB-Septin-like GTPase superfamily. EngB GTPase family. Mg(2+) is required as a cofactor.

Functionally, necessary for normal cell division and for the maintenance of normal septation. The chain is Probable GTP-binding protein EngB from Sinorhizobium medicae (strain WSM419) (Ensifer medicae).